The chain runs to 117 residues: Nascent polypeptide-associated complex protein (117 aa).

The NAC-A/B domain maps to 3–72; it reads PVNPRDLEKM…YTVEKPREET (70 aa).

Belongs to the NAC-alpha family. Homodimer. Interacts with the ribosome. Binds ribosomal RNA.

In terms of biological role, contacts the emerging nascent chain on the ribosome. This is Nascent polypeptide-associated complex protein from Aeropyrum pernix (strain ATCC 700893 / DSM 11879 / JCM 9820 / NBRC 100138 / K1).